Consider the following 334-residue polypeptide: Methionine adenosyltransferase 2 subunit beta (334 aa).

NADP(+) is bound by residues 37–40 (TGLL), 60–62 (FRR), 71–72 (NL), Cys-93, Arg-97, Tyr-159, and Leu-185. Residue Thr-309 is modified to Phosphothreonine. Residues 319–334 (LWPFLIDKRWRQTVFH) are required for interaction with MAT2A.

This sequence belongs to the dTDP-4-dehydrorhamnose reductase family. MAT2B subfamily. As to quaternary structure, heterotrimer; composed of a catalytic MAT2A homodimer that binds one regulatory MAT2B chain. Heterohexamer; composed of a central, catalytic MAT2A homotetramer flanked on either side by a regulatory MAT2B chain. NADP binding increases the affinity for MAT2A.

Its pathway is amino-acid biosynthesis; S-adenosyl-L-methionine biosynthesis; S-adenosyl-L-methionine from L-methionine: step 1/1. Its function is as follows. Regulatory subunit of S-adenosylmethionine synthetase 2, an enzyme that catalyzes the formation of S-adenosylmethionine from methionine and ATP. Regulates MAT2A catalytic activity by changing its kinetic properties, increasing its affinity for L-methionine. Can bind NADP (in vitro). In Rattus norvegicus (Rat), this protein is Methionine adenosyltransferase 2 subunit beta (Mat2b).